Here is a 215-residue protein sequence, read N- to C-terminus: MLQVYLVRHGETQWNAERRIQGQSDSPLTAKGEQQAMQVATRAKELGITHIISSDLGRTRRTAEIIAQACGCDIIFDSRLRELNMGVLEKRHIDSLTEEEENWRRQLVNGTVDGRIPEGESMQELSDRVNAALESCRDLPQGSRPLLVSHGIALGCLVSTILGLPAWAERRLRLRNCSISRVDYQESLWLASGWVVETAGDISHLDAPALDELQR.

Substrate-binding positions include 8 to 15 (RHGETQWN), 21 to 22 (QG), arginine 58, arginine 60, 82 to 85 (ELNM), 104 to 105 (RR), and 151 to 152 (GI). Histidine 9 serves as the catalytic Tele-phosphohistidine intermediate. Glutamate 82 (proton donor/acceptor) is an active-site residue.

Belongs to the phosphoglycerate mutase family. GpmB subfamily.

It catalyses the reaction (2R)-2-phosphoglycerate = (2R)-3-phosphoglycerate. It functions in the pathway carbohydrate degradation; glycolysis; pyruvate from D-glyceraldehyde 3-phosphate: step 3/5. The protein is Probable phosphoglycerate mutase GpmB of Escherichia coli O9:H4 (strain HS).